We begin with the raw amino-acid sequence, 416 residues long: MFSAQDTLAKVDPELWTAIQAENRRQEDHIELIASENYVSHAVMEAQGSQLTNKYAEGYPGKRYYGGCEHVDVAEQIAIDRIKKLFGAEAANVQPNSGSQANQAVLMAFAKPGDTIMGMSLAEGGHLTHGMPLNMSGKWFNVVAYGLDEKEEIDYDAMERLAREHKPRIIIAGASAYSLRIDFERFAKIAKEIGAIFWVDMAHYAGLIAAGYYPNPVPHADVVTSTTHKTLRGPRGGIILMKAEHEKAINSAIFPGLQGGPLMHVIAAKAVAFKEALTPQFRDYQEQVIANARVMARVLGEERGLRIISGRTESHVFLVDLRSKNITGKAAEAVLGSAHITVNKNSIPKDPEKPFVTSGIRIGSPAMTTRGFTEIEAEQVAHLIADVLDAPQDEAVLANVQAKVAELCARHPVYGK.

(6S)-5,6,7,8-tetrahydrofolate contacts are provided by residues L121 and 125–127 (GHL). The residue at position 229 (K229) is an N6-(pyridoxal phosphate)lysine.

This sequence belongs to the SHMT family. In terms of assembly, homodimer. Pyridoxal 5'-phosphate is required as a cofactor.

Its subcellular location is the cytoplasm. It catalyses the reaction (6R)-5,10-methylene-5,6,7,8-tetrahydrofolate + glycine + H2O = (6S)-5,6,7,8-tetrahydrofolate + L-serine. Its pathway is one-carbon metabolism; tetrahydrofolate interconversion. It functions in the pathway amino-acid biosynthesis; glycine biosynthesis; glycine from L-serine: step 1/1. Functionally, catalyzes the reversible interconversion of serine and glycine with tetrahydrofolate (THF) serving as the one-carbon carrier. This reaction serves as the major source of one-carbon groups required for the biosynthesis of purines, thymidylate, methionine, and other important biomolecules. Also exhibits THF-independent aldolase activity toward beta-hydroxyamino acids, producing glycine and aldehydes, via a retro-aldol mechanism. The chain is Serine hydroxymethyltransferase from Aromatoleum aromaticum (strain DSM 19018 / LMG 30748 / EbN1) (Azoarcus sp. (strain EbN1)).